Here is a 906-residue protein sequence, read N- to C-terminus: Coatomer subunit beta' (906 aa).

8 WD repeats span residues 13 to 52 (ARSD…LVKT), 55 to 94 (VCDL…RVHM), 97 to 136 (AHSD…SCSQ), 140 to 180 (GHTH…PNFT), 183 to 224 (GHEK…CVQT), 227 to 266 (GHAQ…LEST), 350 to 388 (SCEI…NKSF), and 390 to 425 (SAQE…KSFK). An N6-acetyllysine modification is found at lysine 627. The stretch at 746–783 (IRTGRLPEAAFLARTYLPSQVSRVVKLWRENLSKVNQK) is one WD 9 repeat. A disordered region spans residues 837 to 872 (EEAKGFQPSRSAAQQELDGKPASPTPVIVTSQTANK). Position 859 is a phosphoserine (serine 859). Threonine 861 bears the Phosphothreonine mark. Residues 866-891 (TSQTANKEEKSLLELEVDLDNLEIED) are a coiled coil.

It belongs to the WD repeat COPB2 family. As to quaternary structure, oligomeric complex that consists of at least the alpha, beta, beta', gamma, delta, epsilon and zeta subunits. Probably interacts with PEX11A. Interacts with SCYL1. Interacts with JAGN1.

The protein localises to the cytoplasm. It is found in the cytosol. The protein resides in the golgi apparatus membrane. It localises to the cytoplasmic vesicle. Its subcellular location is the COPI-coated vesicle membrane. Its function is as follows. The coatomer is a cytosolic protein complex that binds to dilysine motifs and reversibly associates with Golgi non-clathrin-coated vesicles, which further mediate biosynthetic protein transport from the ER, via the Golgi up to the trans Golgi network. Coatomer complex is required for budding from Golgi membranes, and is essential for the retrograde Golgi-to-ER transport of dilysine-tagged proteins. In mammals, the coatomer can only be recruited by membranes associated to ADP-ribosylation factors (ARFs), which are small GTP-binding proteins; the complex also influences the Golgi structural integrity, as well as the processing, activity, and endocytic recycling of LDL receptors. This coatomer complex protein, essential for Golgi budding and vesicular trafficking, is a selective binding protein (RACK) for protein kinase C, epsilon type. It binds to Golgi membranes in a GTP-dependent manner. The protein is Coatomer subunit beta' (COPB2) of Bos taurus (Bovine).